The chain runs to 364 residues: Chorismate synthase (364 aa).

The interval 41–60 (MQHDLDRRRPGTSRYTTARR) is disordered. Residues arginine 48 and arginine 54 each coordinate NADP(+). FMN-binding positions include 125 to 127 (RSS), 238 to 239 (NA), glycine 278, 293 to 297 (KPTSS), and arginine 319.

Belongs to the chorismate synthase family. Homotetramer. Requires FMNH2 as cofactor.

The enzyme catalyses 5-O-(1-carboxyvinyl)-3-phosphoshikimate = chorismate + phosphate. It functions in the pathway metabolic intermediate biosynthesis; chorismate biosynthesis; chorismate from D-erythrose 4-phosphate and phosphoenolpyruvate: step 7/7. Its function is as follows. Catalyzes the anti-1,4-elimination of the C-3 phosphate and the C-6 proR hydrogen from 5-enolpyruvylshikimate-3-phosphate (EPSP) to yield chorismate, which is the branch point compound that serves as the starting substrate for the three terminal pathways of aromatic amino acid biosynthesis. This reaction introduces a second double bond into the aromatic ring system. The sequence is that of Chorismate synthase from Shewanella sp. (strain ANA-3).